The chain runs to 403 residues: Histidine decarboxylase (403 aa).

Histidine 120 provides a ligand contact to substrate. An N6-(pyridoxal phosphate)lysine modification is found at lysine 233.

It belongs to the group II decarboxylase family. In terms of assembly, homotetramer. Pyridoxal 5'-phosphate serves as cofactor.

It carries out the reaction L-histidine + H(+) = histamine + CO2. This is Histidine decarboxylase from Pseudomonas entomophila (strain L48).